Here is a 224-residue protein sequence, read N- to C-terminus: Large ribosomal subunit protein uL4 (224 aa).

A disordered region spans residues 53–74 (RNRSEVSHSTKKPFKQKGTGNA).

This sequence belongs to the universal ribosomal protein uL4 family. In terms of assembly, part of the 50S ribosomal subunit.

One of the primary rRNA binding proteins, this protein initially binds near the 5'-end of the 23S rRNA. It is important during the early stages of 50S assembly. It makes multiple contacts with different domains of the 23S rRNA in the assembled 50S subunit and ribosome. In terms of biological role, forms part of the polypeptide exit tunnel. The chain is Large ribosomal subunit protein uL4 from Chlamydia pneumoniae (Chlamydophila pneumoniae).